We begin with the raw amino-acid sequence, 399 residues long: Forkhead box protein I3 (399 aa).

3 disordered regions span residues 87–109 (AGAQ…GSAA), 221–287 (KRRR…ASTL), and 307–353 (SSSS…STVG). Residues 96–109 (PSASAPASPAGSAA) are compositionally biased toward low complexity. 2 positions are modified to phosphoserine: Ser99 and Ser103. Residues 129-223 (RPPYSYSALI…DNGNFRRKRR (95 aa)) constitute a DNA-binding region (fork-head). Positions 219-225 (RRKRRRR) match the Nuclear localization signal motif. 2 stretches are compositionally biased toward polar residues: residues 228–248 (ASSN…SSRL) and 258–267 (SPSSILRPSQ). A phosphoserine mark is found at Ser258, Ser266, and Ser268. Composition is skewed to polar residues over residues 275–287 (TKST…ASTL), 307–317 (SSSSMGNQRTL), and 328–353 (QLPS…STVG). The 9aaTAD signature appears at 385-393 (SMVNSLIYP).

Phosphorylation promotes the transcription factor activity. Dephosphorylation by protein phosphatase 2A (PP2A) reduces its activity. As to expression, specifically expressed in the epithelium in developing ectodermal appendages. Expressed in pharyngeal endoderm and ectoderm. Expressed in pre-placodal ectoderm. Down-regulated as the otic placode is induced. Expressed in teeth and hair follicles throughout embryogenesis. Expressed in mammary glands only during the earliest stages of development.

Its subcellular location is the nucleus. In terms of biological role, transcription factor required for pharyngeal arch development, which is involved in hair, ear, jaw and dental development. May act as a pioneer transcription factor during pharyngeal arch development. Required for epithelial cell differentiation within the epidermis. Acts at multiple stages of otic placode induction: necessary for preplacodal ectoderm to execute an inner ear program. Required for hair follicle stem cell specification. Acts downstream of TBX1 for the formation of the thymus and parathyroid glands from the third pharyngeal pouch. In Mus musculus (Mouse), this protein is Forkhead box protein I3.